The sequence spans 2642 residues: Fusarielin synthase FSL1 (2642 aa).

Residues 6 to 450 enclose the Ketosynthase family 3 (KS3) domain; the sequence is NEPIAIIGTG…GTNAHAILEA (445 aa). Active-site for beta-ketoacyl synthase activity residues include C179, H318, and H370. The interval 566 to 890 is malonyl-CoA:ACP transacylase (MAT) domain; it reads VFTGQGAQWA…PYTSALVRGK (325 aa). S659 acts as the For malonyltransferase activity in catalysis. The interval 965-1101 is N-terminal hotdog fold; that stretch reads HDLLGIQTAD…GKVCIFLQTE (137 aa). Residues 965 to 1279 are dehydratase (DH) domain; the sequence is HDLLGIQTAD…SFSPFAAATD (315 aa). One can recognise a PKS/mFAS DH domain in the interval 965–1280; it reads HDLLGIQTAD…FSPFAAATDR (316 aa). Catalysis depends on H997, which acts as the Proton acceptor; for dehydratase activity. A C-terminal hotdog fold region spans residues 1126–1280; that stretch reads MAGIDVERFY…FSPFAAATDR (155 aa). The active-site Proton donor; for dehydratase activity is the D1189. The interval 1423-1622 is methyltransferase (MET) domain; the sequence is NYLDRYYTHA…GVDTNTPMPD (200 aa). The interval 2244–2423 is ketoreductase (KR) domain; that stretch reads TYWMLGLTGD…GHNAAVIDIS (180 aa). The Carrier domain occupies 2556–2635; that stretch reads QEVTSVLTSC…DLADYILESL (80 aa). O-(pantetheine 4'-phosphoryl)serine is present on S2595.

Pantetheine 4'-phosphate serves as cofactor.

It participates in secondary metabolite biosynthesis. In terms of biological role, reducing polyketide synthase; part of the gene cluster that mediates the biosynthesis of fusarielins F, G and H, decaketide compounds with 5 methylations and a decaline core that act as mycoestrogens as they stimulate growth of MCF-7 breast cancer cells. The initial compound in the pathway is produced by the reducing polyketide synthase FSL1. FSL1 lacks an active enoyl reductase (ER) domain and biosynthesis of fusarielins relies on the trans-acting enoyl reductase FSL5, before it is released through hydrolysis catalyzed by the thioesterase FSL2. Fusarielins F, G, and H have a C11=C12 cis double bond and is fully reduced between C10 and C11 and between C12 and C13. FSL3 can be involved in the formation of the C11=C12 cis double bond by moving a hypothetical C10=C11 or C12=C13 trans double bond to form prefusarielin. Prefusarielin is oxygenated at C15 and C16 by the cytochrome P450 monooxygenase FSL4, resulting in fusarielin F, which subsequently is epoxidized into fusarielin G by the same enzyme. The final step in the pathway is a reduction of the carboxylic acid moiety to yield fusarielin H via a still undetermined mechanism. This chain is Fusarielin synthase FSL1, found in Gibberella zeae (strain ATCC MYA-4620 / CBS 123657 / FGSC 9075 / NRRL 31084 / PH-1) (Wheat head blight fungus).